The sequence spans 1031 residues: Protein translocase subunit SecA (1031 aa).

ATP contacts are provided by residues Gln-143, 161-165 (GEGKT), and Asp-662. The Zn(2+) site is built by Cys-1015, Cys-1017, Cys-1026, and Cys-1027.

The protein belongs to the SecA family. In terms of assembly, monomer and homodimer. Part of the essential Sec protein translocation apparatus which comprises SecA, SecYEG and auxiliary proteins SecDF. Other proteins may also be involved. Requires Zn(2+) as cofactor.

Its subcellular location is the cell inner membrane. The protein resides in the cytoplasm. It catalyses the reaction ATP + H2O + cellular proteinSide 1 = ADP + phosphate + cellular proteinSide 2.. Its function is as follows. Part of the Sec protein translocase complex. Interacts with the SecYEG preprotein conducting channel. Has a central role in coupling the hydrolysis of ATP to the transfer of proteins into and across the cell membrane, serving as an ATP-driven molecular motor driving the stepwise translocation of polypeptide chains across the membrane. The protein is Protein translocase subunit SecA of Chlorobaculum tepidum (strain ATCC 49652 / DSM 12025 / NBRC 103806 / TLS) (Chlorobium tepidum).